The primary structure comprises 191 residues: dTTP/UTP pyrophosphatase (191 aa).

D71 acts as the Proton acceptor in catalysis.

Belongs to the Maf family. YhdE subfamily. A divalent metal cation is required as a cofactor.

It is found in the cytoplasm. The catalysed reaction is dTTP + H2O = dTMP + diphosphate + H(+). It catalyses the reaction UTP + H2O = UMP + diphosphate + H(+). Nucleoside triphosphate pyrophosphatase that hydrolyzes dTTP and UTP. May have a dual role in cell division arrest and in preventing the incorporation of modified nucleotides into cellular nucleic acids. The sequence is that of dTTP/UTP pyrophosphatase from Geobacter sulfurreducens (strain ATCC 51573 / DSM 12127 / PCA).